A 399-amino-acid chain; its full sequence is Acetate kinase (399 aa).

Residue N10 coordinates Mg(2+). ATP is bound at residue K17. R91 is a binding site for substrate. D148 (proton donor/acceptor) is an active-site residue. Residues 208 to 212 (HLGNG), 283 to 285 (DCR), and 331 to 335 (GIGEN) contribute to the ATP site. Residue E385 participates in Mg(2+) binding.

This sequence belongs to the acetokinase family. As to quaternary structure, homodimer. Mg(2+) serves as cofactor. The cofactor is Mn(2+).

The protein resides in the cytoplasm. It carries out the reaction acetate + ATP = acetyl phosphate + ADP. It functions in the pathway metabolic intermediate biosynthesis; acetyl-CoA biosynthesis; acetyl-CoA from acetate: step 1/2. Functionally, catalyzes the formation of acetyl phosphate from acetate and ATP. Can also catalyze the reverse reaction. This chain is Acetate kinase, found in Shewanella sp. (strain MR-4).